We begin with the raw amino-acid sequence, 156 residues long: Arginine repressor (156 aa).

Belongs to the ArgR family.

The protein localises to the cytoplasm. The protein operates within amino-acid biosynthesis; L-arginine biosynthesis [regulation]. In terms of biological role, regulates arginine biosynthesis genes. The chain is Arginine repressor from Shewanella sp. (strain ANA-3).